A 221-amino-acid chain; its full sequence is Phosphoribosylformylglycinamidine synthase subunit PurQ (221 aa).

The region spanning 3–221 is the Glutamine amidotransferase type-1 domain; that stretch reads AAVLVFPGSN…MFASLMQVMA (219 aa). Cys87 functions as the Nucleophile in the catalytic mechanism. Active-site residues include His195 and Glu197.

In terms of assembly, part of the FGAM synthase complex composed of 1 PurL, 1 PurQ and 2 PurS subunits.

The protein localises to the cytoplasm. The enzyme catalyses N(2)-formyl-N(1)-(5-phospho-beta-D-ribosyl)glycinamide + L-glutamine + ATP + H2O = 2-formamido-N(1)-(5-O-phospho-beta-D-ribosyl)acetamidine + L-glutamate + ADP + phosphate + H(+). It catalyses the reaction L-glutamine + H2O = L-glutamate + NH4(+). It participates in purine metabolism; IMP biosynthesis via de novo pathway; 5-amino-1-(5-phospho-D-ribosyl)imidazole from N(2)-formyl-N(1)-(5-phospho-D-ribosyl)glycinamide: step 1/2. Part of the phosphoribosylformylglycinamidine synthase complex involved in the purines biosynthetic pathway. Catalyzes the ATP-dependent conversion of formylglycinamide ribonucleotide (FGAR) and glutamine to yield formylglycinamidine ribonucleotide (FGAM) and glutamate. The FGAM synthase complex is composed of three subunits. PurQ produces an ammonia molecule by converting glutamine to glutamate. PurL transfers the ammonia molecule to FGAR to form FGAM in an ATP-dependent manner. PurS interacts with PurQ and PurL and is thought to assist in the transfer of the ammonia molecule from PurQ to PurL. This chain is Phosphoribosylformylglycinamidine synthase subunit PurQ, found in Zymomonas mobilis subsp. mobilis (strain ATCC 31821 / ZM4 / CP4).